Consider the following 464-residue polypeptide: Argininosuccinate lyase (464 aa).

It belongs to the lyase 1 family. Argininosuccinate lyase subfamily.

It is found in the cytoplasm. The catalysed reaction is 2-(N(omega)-L-arginino)succinate = fumarate + L-arginine. The protein operates within amino-acid biosynthesis; L-arginine biosynthesis; L-arginine from L-ornithine and carbamoyl phosphate: step 3/3. The sequence is that of Argininosuccinate lyase from Stutzerimonas stutzeri (strain A1501) (Pseudomonas stutzeri).